The following is a 428-amino-acid chain: Dihydroorotase (428 aa).

Zn(2+) is bound by residues histidine 59 and histidine 61. Residues 61-63 (HLR) and asparagine 93 each bind substrate. Aspartate 151, histidine 178, and histidine 231 together coordinate Zn(2+). Residue asparagine 277 participates in substrate binding. A Zn(2+)-binding site is contributed by aspartate 304. Residue aspartate 304 is part of the active site. Substrate contacts are provided by residues histidine 308 and 322-323 (FG).

It belongs to the metallo-dependent hydrolases superfamily. DHOase family. Class I DHOase subfamily. Zn(2+) serves as cofactor.

The catalysed reaction is (S)-dihydroorotate + H2O = N-carbamoyl-L-aspartate + H(+). The protein operates within pyrimidine metabolism; UMP biosynthesis via de novo pathway; (S)-dihydroorotate from bicarbonate: step 3/3. Its function is as follows. Catalyzes the reversible cyclization of carbamoyl aspartate to dihydroorotate. This chain is Dihydroorotase, found in Bacillus anthracis (strain A0248).